The sequence spans 355 residues: Protein-tyrosine sulfotransferase 1 (355 aa).

At 1-8 the chain is on the cytoplasmic side; it reads MIGKLKQN. A helical; Signal-anchor for type II membrane protein transmembrane segment spans residues 9–25; it reads LLVACLVISSVTVFYLC. Residues 26 to 355 are Lumenal-facing; sequence RHAMDCHHRI…QKSPEKPNPS (330 aa). The N-linked (GlcNAc...) asparagine glycan is linked to N55. 76-80 contributes to the 3'-phosphoadenylyl sulfate binding site; sequence RSGTT. Cysteines 94 and 154 form a disulfide. The Proton donor/acceptor role is filled by E97. The segment at 99-103 is interaction with peptide substrate; the sequence is RVIPR. 3 residues coordinate 3'-phosphoadenylyl sulfate: R181, S189, and R193. An intrachain disulfide couples C223 to C230. 3'-phosphoadenylyl sulfate is bound by residues Y235, 282–291, and K297; that span reads STDQVIKPVN. The disordered stretch occupies residues 325 to 355; it reads HANPPNYGRPDPLVLDNTRRLQKSPEKPNPS. Residues 341 to 355 show a composition bias toward basic and acidic residues; it reads NTRRLQKSPEKPNPS.

This sequence belongs to the protein sulfotransferase family.

Its subcellular location is the golgi apparatus membrane. The catalysed reaction is L-tyrosyl-[protein] + 3'-phosphoadenylyl sulfate = O-sulfo-L-tyrosine-[protein] + adenosine 3',5'-bisphosphate + H(+). Catalyzes the O-sulfation of tyrosine residues within acidic motifs of polypeptides, using 3'-phosphoadenylyl sulfate (PAPS) as cosubstrate. The chain is Protein-tyrosine sulfotransferase 1 (tpst1) from Danio rerio (Zebrafish).